A 504-amino-acid chain; its full sequence is Nuclear hormone receptor family member nhr-80 (504 aa).

The segment at residues 27–103 (STRCLICSAQ…NGMKPGGVQP (77 aa)) is a DNA-binding region (nuclear receptor). NR C4-type zinc fingers lie at residues 30–50 (CLICSAQATGFHFEAQSCSAC) and 66–86 (CITGRDDCNVHYSMHQICRSC). Positions 177 to 192 (SSSTSFSASTTTNYST) are enriched in low complexity. Residues 177–199 (SSSTSFSASTTTNYSTPGPSPMA) are disordered. The region spanning 214–466 (EEMKLGERRR…KLVLQLLNLD (253 aa)) is the NR LBD domain. The tract at residues 455–466 (LDKLVLQLLNLD) is AF-2.

Belongs to the nuclear hormone receptor family. As to quaternary structure, interacts with nuclear hormone receptor nhr-49; the interaction is direct. In terms of tissue distribution, expressed in the intestine and in some head and tail neurons, as well as the ventral nerve cord.

Its subcellular location is the nucleus. In terms of biological role, transcription factor. Binds to regulatory elements and regulates transcription of target genes, including acyltransferase dgat-2. As part of a lysosome-to-nucleus retrograde lipid signaling pathway, acts as a direct nuclear receptor of oleoylethanolamide (OEA) and, acting in concert with nuclear hormone receptor nhr-49, activates the transcription of genes promoting longevity and mitochondrial beta-oxidation. Required to modulate expression of delta-9 fatty acid desaturases, thereby regulating lipid metabolism; in some contexts, acting in concert with nhr-49. Involved in modulation of lipid metabolism in response to the citrate-induced mitochondrial unfolded protein response (mtUPR), acting downstream of transcription factor dve-1 and ubiquitin-like protein 5. Plays a role in modulating mitochondrial morphology and function. Involved in positively modulating life-span in a germline-dependent manner, acting in concert with nuclear hormone receptor daf-12. Plays a role in transgenerational lipid accumulation in response to a high-fat diet. This is Nuclear hormone receptor family member nhr-80 from Caenorhabditis elegans.